Consider the following 405-residue polypeptide: MCSIGEDDFGDEGAAHAMVVESLPLGIVLSPGNCSKCDVNSGELYKLNFRTAECRECFLAYARHKFRAALGAAKILPRNAEVLLVLDGSAESLVLLDMLHFAQTQNTFKRLHCNARVVYVEEQQVQGRDPVDLEALQRLSTQYAPFDFYVIELGALPSSLQRIKDYSPFLNANNELIHKLQKLRSLTARQDYLQQQRKNLICSVAQCLQCTHVFESNISVDLATQLLTAIALGRGGSAALDVALLDDRLSGDVKLLRPLKDLTEQEIQFYIHAQRLKPHFQKGSRYGMEHGETASLQNLTSAFVANLQQNFASTVSTVFRTGDKIAVNSNPEQSSCVHCRSTLDSELSDTLLAIEYSRSVSEAGVSLYKSGQDLEGLAKKRLENKDGLCHACRAIQTELDSGNLL.

This sequence belongs to the CTU2/NCS2 family.

The protein resides in the cytoplasm. Its pathway is tRNA modification; 5-methoxycarbonylmethyl-2-thiouridine-tRNA biosynthesis. Plays a central role in 2-thiolation of mcm(5)S(2)U at tRNA wobble positions of tRNA(Lys), tRNA(Glu) and tRNA(Gln). May act by forming a heterodimer with NCS6/CTU1 that ligates sulfur from thiocarboxylated URM1 onto the uridine of tRNAs at wobble position. This Drosophila melanogaster (Fruit fly) protein is Cytoplasmic tRNA 2-thiolation protein 2.